A 137-amino-acid chain; its full sequence is Small ribosomal subunit protein uS12 (137 aa).

A disordered region spans residues 1 to 57; the sequence is MPTINQLVRKPRQSKIKKSDSPALNKGFNSKKKKFTDLNSPQKRGVCTRVGTMTPRK. The residue at position 102 (aspartate 102) is a 3-methylthioaspartic acid. Residues 118-137 form a disordered region; that stretch reads SGVDGRRQGRSLYGTKKPKN.

It belongs to the universal ribosomal protein uS12 family. As to quaternary structure, part of the 30S ribosomal subunit. Contacts proteins S8 and S17. May interact with IF1 in the 30S initiation complex.

In terms of biological role, with S4 and S5 plays an important role in translational accuracy. Its function is as follows. Interacts with and stabilizes bases of the 16S rRNA that are involved in tRNA selection in the A site and with the mRNA backbone. Located at the interface of the 30S and 50S subunits, it traverses the body of the 30S subunit contacting proteins on the other side and probably holding the rRNA structure together. The combined cluster of proteins S8, S12 and S17 appears to hold together the shoulder and platform of the 30S subunit. The sequence is that of Small ribosomal subunit protein uS12 from Staphylococcus aureus (strain COL).